The primary structure comprises 77 residues: Large ribosomal subunit protein uL29 (77 aa).

It belongs to the universal ribosomal protein uL29 family.

The protein is Large ribosomal subunit protein uL29 of Mycolicibacterium vanbaalenii (strain DSM 7251 / JCM 13017 / BCRC 16820 / KCTC 9966 / NRRL B-24157 / PYR-1) (Mycobacterium vanbaalenii).